A 407-amino-acid chain; its full sequence is F-box protein SKIP23 (407 aa).

An F-box domain is found at 2–50; that stretch reads VDWSTLPKDLLDLISKSLESSFDLIQFRSVCSSWRSAAEPKSPLPTHHL.

Part of a SCF (ASK-cullin-F-box) protein ligase complex. Interacts with SKP1A/ASK1.

It is found in the nucleus. It participates in protein modification; protein ubiquitination. Functionally, component of SCF(ASK-cullin-F-box) E3 ubiquitin ligase complexes, which may mediate the ubiquitination and subsequent proteasomal degradation of target proteins. The sequence is that of F-box protein SKIP23 (SKIP23) from Arabidopsis thaliana (Mouse-ear cress).